Reading from the N-terminus, the 410-residue chain is Dephospho-CoA kinase (410 aa).

The DPCK domain occupies 3–201 (CIGITGGIGA…HRILPFAYNL (199 aa)). 11 to 16 (GAGKSL) is a binding site for ATP. Positions 196 to 410 (PFAYNLSQRQ…EWADSTGWRL (215 aa)) are UPF0157.

In the N-terminal section; belongs to the CoaE family. It in the C-terminal section; belongs to the UPF0157 (GrpB) family.

The protein resides in the cytoplasm. It carries out the reaction 3'-dephospho-CoA + ATP = ADP + CoA + H(+). It participates in cofactor biosynthesis; coenzyme A biosynthesis; CoA from (R)-pantothenate: step 5/5. Its function is as follows. Catalyzes the phosphorylation of the 3'-hydroxyl group of dephosphocoenzyme A to form coenzyme A. The polypeptide is Dephospho-CoA kinase (Mycobacterium leprae (strain TN)).